The sequence spans 172 residues: RNA pyrophosphohydrolase (172 aa).

The 144-residue stretch at 6 to 149 (GFRANVGIII…KRDVYRKVMK (144 aa)) folds into the Nudix hydrolase domain. A Nudix box motif is present at residues 38 to 59 (GGLDDGESVEEAMYRELYEEVG).

This sequence belongs to the Nudix hydrolase family. RppH subfamily. Requires a divalent metal cation as cofactor.

Functionally, accelerates the degradation of transcripts by removing pyrophosphate from the 5'-end of triphosphorylated RNA, leading to a more labile monophosphorylated state that can stimulate subsequent ribonuclease cleavage. The protein is RNA pyrophosphohydrolase of Shewanella frigidimarina (strain NCIMB 400).